We begin with the raw amino-acid sequence, 185 residues long: Casparian strip membrane protein 5 (185 aa).

Topologically, residues 1–25 (MKAEAVESGEASTIIAAPKRGINRG) are cytoplasmic. Residues 26 to 46 (ISIADLILRGVAAIGTFASAL) traverse the membrane as a helical segment. Topologically, residues 47 to 75 (TMGTTSETLTIFTQPIMIRAKYNDLPSLT) are extracellular. The chain crosses the membrane as a helical span at residues 76–96 (FFVIANSIVCGYLVLSIPLSI). The Cytoplasmic segment spans residues 97 to 108 (SHFIRREARITR). The helical transmembrane segment at 109–129 (IILVIFDTAMVELLTAGASAA) threads the bilayer. At 130–160 (TVVVYLAHKRNANWLAICQQFNNFCERISGS) the chain is on the extracellular side. The helical transmembrane segment at 161–181 (LIGSFASIIMIMLIIITSAVA) threads the bilayer. Residues 182–185 (LSRH) lie on the Cytoplasmic side of the membrane.

This sequence belongs to the Casparian strip membrane proteins (CASP) family. As to quaternary structure, homodimer and heterodimers.

It localises to the cell membrane. Functionally, regulates membrane-cell wall junctions and localized cell wall deposition. Required for establishment of the Casparian strip membrane domain (CSD) and the subsequent formation of Casparian strips, a cell wall modification of the root endodermis that determines an apoplastic barrier between the intraorganismal apoplasm and the extraorganismal apoplasm and prevents lateral diffusion. The protein is Casparian strip membrane protein 5 of Populus trichocarpa (Western balsam poplar).